We begin with the raw amino-acid sequence, 344 residues long: Serpentine receptor class alpha-27 (344 aa).

The next 7 membrane-spanning stretches (helical) occupy residues 28-48 (SIWMKINFVFVFILIFLTFYL), 67-87 (QILLMITLLNANLNQLIFLEI), 128-148 (GLLSALTFDRFFALYASTVYV), 157-177 (MLITVSIIVTVIVHIRTYGGV), 203-223 (AIFWIIMANCVLTIAVLLLNI), 252-272 (ICSVTSTQFVFLSFSTAALAI), and 287-307 (INIQYINGGVYGNLSIPVLIY).

It belongs to the nematode receptor-like protein sra family.

Its subcellular location is the membrane. This is Serpentine receptor class alpha-27 (sra-27) from Caenorhabditis elegans.